Consider the following 462-residue polypeptide: MTKNHKLWGGRFESSLEKWVEEFGASISFDQKLAPYDMKASMAHVTMLGKTDIISQEEAGLIKDGLKILQDKYRAGQLTFSISNEDIHMNIESLLTAEIGEVAGKLHTARSRNDQVATDMHLYLKDKLQEMMKKLLHLRITLVNLAENHIYTVMPGYTHLQHAQPISFGHHLMAYYNMFTRDTERLEFNMKHTNLSPLGAAALAGTTFPIDRHMTTRLLDFEKPYSNSLDAVSDRDFIIEFLSNASILMMHLSRFCEEIINWCSYEYQFITLSDTFSTGSSIMPQKKNPDMAELIRGKTGRVYGNLFSLLTVMKSLPLAYNKDLQEDKEGMFDSVETVSIAIEIMANMLETMTVNEHIMMTSTETDFSNATELADYLASKGIPFRKAHEIVGKLVLECSKNGSYLQDIPLKYYQEISELIENDIYEILTAKTAVKRRNSLGGTGFDQVKKQILLARKELKAE.

The protein belongs to the lyase 1 family. Argininosuccinate lyase subfamily.

The protein resides in the cytoplasm. The enzyme catalyses 2-(N(omega)-L-arginino)succinate = fumarate + L-arginine. Its pathway is amino-acid biosynthesis; L-arginine biosynthesis; L-arginine from L-ornithine and carbamoyl phosphate: step 3/3. This is Argininosuccinate lyase from Streptococcus agalactiae serotype Ia (strain ATCC 27591 / A909 / CDC SS700).